A 2042-amino-acid polypeptide reads, in one-letter code: Protein mini spindles (2042 aa).

2 TOG regions span residues 1-229 (MAED…VEPS) and 267-505 (MDLL…KVAG). A binds tubulin region spans residues 1 to 505 (MAEDTEYKKL…KAEIKIKVAG (505 aa)). Promotes microtubule polymerization stretches follow at residues 1–516 (MAED…ASAP) and 581–1080 (TPEE…EKAR). HEAT repeat units lie at residues 120-157 (EKQEAVVEELVKGMEAKNPKIVSACVAATTLALREFGH), 160-197 (IGVKPLIKKLAPLMSDRDKTVRDEGKQLAVEIYRWIGA), 270-311 (LDPV…DHPK), 315-353 (GEYGALVSALKKVITKDSNVVLVAMAGKCLALLAKGLAK), 357-394 (NYASACVPSLLEKFKEKKPNVVTALREAIDAIYASTSL), 396-433 (AQQESIVESLSNKNPSVKSETALFIARALTRTQPTALN), and 440-478 (LTTSLVKTLNEPDPTVRDSSAEALGTLIKLMGDKAVTPL). Residues 498–821 (EIKIKVAGPK…PKPVRGVQRS (324 aa)) are association with microtubule lattice. Residues 506–572 (PKKETRPASA…PTAALKAGGK (67 aa)) are disordered. The segment covering 513 to 531 (ASAPTAKAAAPAKTVAGSV) has biased composition (low complexity). The tract at residues 581–814 (TPEELQEKSE…KNVGEKPPKP (234 aa)) is TOG 3. HEAT repeat units follow at residues 587–624 (EKSEEILPAEILNGLVDSNWKNRLAAVEQLLGEISGFD), 625–662 (AKQAGISQILIRTISGRKPGLKEMNFQVLKFKLDIIRS), 672–710 (TTVDLVINEIIEKLADAKNGAAAADVLSAFAEATKLEYV), and 745–782 (LQPKTLIEDVRKGVQSTNPTVRASAIQMVGTMSMYMGK). The disordered stretch occupies residues 804-849 (DKNVGEKPPKPVRGVQRSSGGTAGNSPDNEDDDGGAAGEEEPINMA). The span at 819–830 (QRSSGGTAGNSP) shows a compositional bias: polar residues. A compositionally biased stretch (acidic residues) spans 831–845 (DNEDDDGGAAGEEEP). TOG regions lie at residues 849-1087 (ADLL…PVKP) and 1179-1415 (TELL…KPTP). HEAT repeat units lie at residues 856–893 (DIAPQITEALLKEMSDKDWKTRNEGLTKLQAIISEARL), 896–933 (PSIGDLAPALAHRLVDSNAKIAQTTLAICEQLATAMGA), 937–974 (NHVRNLFPGFLHALGDNKSFVRAAALNCINSFGEKGGY), and 1017–1054 (EDIHSMVPHLYAHICDRNADVRKNANEAVLGIMIHLGF). The disordered stretch occupies residues 1083–1140 (LPVKPLPKGKHQAPIPEEPKLKTVRGGGAGGAPGIQKSATARVAGGQDKQVPARKKDE). The segment at 1099 to 1428 (EEPKLKTVRG…VDVPAPQRHD (330 aa)) is association with microtubule lattice. 4 HEAT repeats span residues 1205–1242 (RYHLKVIEQLSEDLAGNSKALVCNLDLILKWLTLRFYD), 1272–1309 (NEGSSFVPHLLLKIGDPKDAVRNGVRRVLRQVILVFPF), 1311–1344 (KVFGYVMEGLKSKNARQRTECLDELTFLIESYGM), and 1346–1383 (ICPQSAVREIARQISDRDNSVRNAALNCIVQVFFLSGE). 2 disordered regions span residues 1407–1455 (AKKT…TFDQ) and 1940–1959 (NAGSTQDNRTDVNYQNNGPD). The segment covering 1940–1957 (NAGSTQDNRTDVNYQNNG) has biased composition (polar residues).

Belongs to the TOG/XMAP215 family. In terms of assembly, interacts with tacc, dgt6. Interacts with mv. Interacts with Patronin.

The protein localises to the cytoplasm. It is found in the cytoskeleton. It localises to the microtubule organizing center. The protein resides in the centrosome. Its subcellular location is the spindle. The protein localises to the perinuclear region. In terms of biological role, binds to the plus end of microtubules and regulates microtubule dynamics and microtubule organization. Function in neurons is essential for adult survival, and is important for climbing behavior and activity. Promotes cytoplasmic microtubule nucleation and elongation. May act as a microtubule antipause factor that rapidly catalyzes the transition from pause to either growth or shrinkage. Involved in mitotic spindle elongation. Involved in the establishment of cell polarity and mitotic spindle orientation in neuroblasts. Required for maintaining the bipolarity of acentrosomal meiotic spindles; the function is dependent on tacc and involves ncd. Involved in oocyte microtubule cytoskeleton organization and bicoid mRNA localization. Seems to be involved in elongation of kinetochore-derived microtubule fibers. In fat body cells, essential component of perinuclear non-centrosomal microtubule-organizing centers (ncMTOCs) which function to accommodate the organization of microtubule (MT) networks to control nuclear positioning and dynein motor-based retrograde endosomal trafficking. Within the ncMTOCs, Msp300 and shot anchors the ncMTOC at the nuclear surface and recruits the MT minus-end regulators Patronin and Nin for assembly, anchoring and/or stabilization of circumferential and radial MTs at the ncMTOCs. Patronin, and perhaps Nin, then recruits msps to the ncMTOC where it is required for the gamma-tubulin-independent elongation and assembly of radial MTs. The chain is Protein mini spindles (msps) from Drosophila melanogaster (Fruit fly).